The primary structure comprises 100 residues: MKISEEEVRHVAKLSKLSFSESETTTFATTLSKIVDMVELLNEVDTEGVAITTTMADKKNVMRQDIAEEGTDRALLFKNVPEKENHFIKVPAILDDGGDA.

It belongs to the GatC family. Heterotrimer of A, B and C subunits.

It catalyses the reaction L-glutamyl-tRNA(Gln) + L-glutamine + ATP + H2O = L-glutaminyl-tRNA(Gln) + L-glutamate + ADP + phosphate + H(+). It carries out the reaction L-aspartyl-tRNA(Asn) + L-glutamine + ATP + H2O = L-asparaginyl-tRNA(Asn) + L-glutamate + ADP + phosphate + 2 H(+). Its function is as follows. Allows the formation of correctly charged Asn-tRNA(Asn) or Gln-tRNA(Gln) through the transamidation of misacylated Asp-tRNA(Asn) or Glu-tRNA(Gln) in organisms which lack either or both of asparaginyl-tRNA or glutaminyl-tRNA synthetases. The reaction takes place in the presence of glutamine and ATP through an activated phospho-Asp-tRNA(Asn) or phospho-Glu-tRNA(Gln). This chain is Aspartyl/glutamyl-tRNA(Asn/Gln) amidotransferase subunit C, found in Streptococcus pyogenes serotype M49 (strain NZ131).